A 615-amino-acid chain; its full sequence is DNA mismatch repair protein MutL (615 aa).

The tract at residues 362–397 (HFAEPAVREPVAPRYSPAPASGSRPAAPWPNAQPGY) is disordered. Residues 373-387 (APRYSPAPASGSRPA) are compositionally biased toward low complexity.

This sequence belongs to the DNA mismatch repair MutL/HexB family.

Functionally, this protein is involved in the repair of mismatches in DNA. It is required for dam-dependent methyl-directed DNA mismatch repair. May act as a 'molecular matchmaker', a protein that promotes the formation of a stable complex between two or more DNA-binding proteins in an ATP-dependent manner without itself being part of a final effector complex. The protein is DNA mismatch repair protein MutL of Escherichia coli O81 (strain ED1a).